A 1830-amino-acid chain; its full sequence is MSVDTLGWSAQDWIDFHGKSTPEHSYNTLLSLLKSQKSAPEDPAWISLINEANLAHQWKVLQSKANKQQLPLYGVPIAVKDNIDSKGSPTTAACPAFEYNPSADSTVVALLKDAGAIVIGKTNLDQFATGLVGTRSPYGKTPCVFSDKHVSGGSSAGSASAVGRGIVPIALGTDTAGSGRVPAALNNLIGLKPTKGLFSCSGVVPACKSLDCVSVFAMNLSDAERCFKVMAKPDLENDEYSRPLPSNPLQKYPKNVTIAIPKEVPWYGETENPKLYAKAIENLKVAGASIVTIDFEPLLALARCLYEGAWVAERYEATKDFFATNPPESSLDPTVTSIIKTATKYDAADSFRYEYQRQGILQKVDQTLKDIDVLCVPTCPLNPTFEEVAAEPVLVNSRQGTWTNFVNLADMAALAVPAGFRPDGLPQGVTLIGKKFTDFALLELANRYFKVAFPQGSRTFGKFIDRQVTTKDDELRGPDISPEDSVKLAVVGAHLKGLPLYWQLEKVNATYLGSPKTSKNYKLYALPKTGPILKPGLRRVGEETGSQIQLEVYSVPKENFGEFISMVPEPLGIGSVELESGEWVKSFICEEFGYTQKGTVDITKYGGFKKYIDFLKQEEAKVKKPFETVLIANRGEIAVRIIKTLKKLNIRSVAVYSDPDKYSQHVIDADLGVALNGRTAAETYLDIDKIIKAAKDTNAQAIIPGYGFLSENAEFADKCVEEGIVFVGPSGEAIRKLGLKHSAREIAEKAGVPLVPGSGLVTSAKEAKEIANKLEYPVMVKSTAGGGGIGLQKVDSENEIERVFETVQHQGKAYFGDSGVFLERFVENARHVEIQMMGDGYGKAIAIGERDCSLQRRNQKIIEETPAPNLGETTRTKMRQAAESLGSLLKYKCAGTVEFIYDERRDEFYFLEVNARLQVEHPITEMVTGLDLVEWMLRIAADDAPDFESANIVVTGASIEARLYAENPAKDFRPSPGLLTDVHFPEWARVDTWVSKGTTVSAEYDPTLAKIIVHGKDRNDAIMKMNKALNETVVYGCITNIDYLRSIASSEMFKTAKVATKILDSYDYKPCAFEVTSPGAYTTVQDYPGRVGYWRIGVPPSGPMDAYSFRLANRIVGNHYKAPAIELTLNGPKILFHTETIIAISGGIAACSLNDKPIEQNKPIQVNRGDHLAIGKLSVGCRAYLAIRGGIDVPEYLGSRSTFALGNMGGYNGRVLKLGDVLFLNQPELASSSLPGPAYEPQAPPANLLPKISDDKEWTIGVTCGPHGSPDFFKPESVEEFFSEKWKVHYNSNRFGVRLIGPKPKWARKDGGEGGLHPSNAHDYVYSLGAINFTGDEPVIITSDGPSLGGFVCQAVVPEAELWKVGQVKPGDSIQFVPISYQVARQLKESQDAAIETLEDGKLQTLTSDLILPTYEDPVLVQLPKKSNLSPKVTYRQAGDRYILVEYGENQMDLNIAYRINQLINLVGKHKTVGIVEMSQGVRSVLIEYDGYKISQGALLDTLVAYESEIQFDKNWSIKSKIFKLPLAFEDSKTLECVTRYQETIRSKAPWLPNNVDFVAEVNDITHKDVENMLYSARFLVLGLGDVFLGAPCAVPLDPRHRFLGSKYNPSRTYTKNGVVGIGGMYMCIYAMDSPGGYQLVGRTIPIWDKLKLGSHSQEHPWLLTPFDQVEFYPVSEEELDRFTEDCENGKFPVQVEESVFDHKNYLKWINENIESITEFQKSQGGAKADEFARLIQVANQELESSTTNKSAVEEEYPEDAEMVYSEYSGRFWKPMVSAGDTVTKGDGLVIVEAMKTEMVVPAKKSGKVLKIVHKNGDMVDAGDLVAVIQ.

Residues 115 to 122 (GAIVIGKT), Lys740, Glu823, and Asn858 contribute to the ATP site. A Biotin carboxylation domain is found at 625 to 1068 (PFETVLIANR…ATKILDSYDY (444 aa)). Residues 744 to 941 (REIAEKAGVP…LVEWMLRIAA (198 aa)) form the ATP-grasp domain. The 79-residue stretch at 1752–1830 (AVEEEYPEDA…DAGDLVAVIQ (79 aa)) folds into the Biotinyl-binding domain. Lys1796 bears the N6-biotinyllysine mark.

The protein belongs to the DUR1,2 family. In terms of assembly, monomer. It depends on biotin as a cofactor.

It carries out the reaction urea + hydrogencarbonate + ATP = urea-1-carboxylate + ADP + phosphate + H(+). It catalyses the reaction urea-1-carboxylate + H2O + 3 H(+) = 2 NH4(+) + 2 CO2. It functions in the pathway nitrogen metabolism; urea degradation; CO(2) and NH(3) from urea (allophanate route): step 1/2. Its pathway is nitrogen metabolism; urea degradation; CO(2) and NH(3) from urea (allophanate route): step 2/2. In terms of biological role, involved in uracil catabolism. Hydrolysis of urea to ammonia and CO(2). This Lachancea kluyveri (Yeast) protein is Urea amidolyase (DUR1,2).